The primary structure comprises 181 residues: NADH-quinone oxidoreductase subunit I (181 aa).

4Fe-4S ferredoxin-type domains are found at residues 52–81 (TRDS…LKKG) and 91–120 (KFFR…LTPD). [4Fe-4S] cluster is bound by residues C61, C64, C67, C71, C100, C103, C106, and C110.

The protein belongs to the complex I 23 kDa subunit family. NDH-1 is composed of 13 different subunits. Subunits NuoA, H, J, K, L, M, N constitute the membrane sector of the complex. It depends on [4Fe-4S] cluster as a cofactor.

The protein resides in the cell inner membrane. It catalyses the reaction a quinone + NADH + 5 H(+)(in) = a quinol + NAD(+) + 4 H(+)(out). Functionally, NDH-1 shuttles electrons from NADH, via FMN and iron-sulfur (Fe-S) centers, to quinones in the respiratory chain. The immediate electron acceptor for the enzyme in this species is believed to be ubiquinone. Couples the redox reaction to proton translocation (for every two electrons transferred, four hydrogen ions are translocated across the cytoplasmic membrane), and thus conserves the redox energy in a proton gradient. In Blochmanniella pennsylvanica (strain BPEN), this protein is NADH-quinone oxidoreductase subunit I.